Here is a 117-residue protein sequence, read N- to C-terminus: Transcription elongation factor SPT4 (117 aa).

A2 is modified (N-acetylalanine). Residues 2–40 form an interaction with SUPT5H region; the sequence is ALETVPKDLRHLRACLLCSLVKTIDQFEYDGCDNCDAYL. C16, C19, C33, and C36 together coordinate Zn(2+). The C4-type zinc-finger motif lies at 16 to 36; sequence CLLCSLVKTIDQFEYDGCDNC.

It belongs to the SPT4 family. In terms of assembly, interacts with SUPT5H to form DSIF. DSIF interacts with the positive transcription elongation factor b complex (P-TEFb complex), which is composed of CDK9 and cyclin-T (CCNT1 or CCNT2). DSIF interacts with RNA polymerase II, and this interaction is reduced by phosphorylation of the C-terminal domain (CTD) of POLR2A by P-TEFb. DSIF also interacts with the NELF complex, which is composed of NELFA, NELFB, NELFD and NELFE, and this interaction occurs following prior binding of DSIF to RNA polymerase II. DSIF also interacts with PRMT1/HRMT1L2, TATSF1, RNGTT/CAP1A, PRMT5/SKB1, SUPT6H, and can interact with PIN1. Ubiquitinated by UBR5 when not assembled in the DSIF complex, leading to its degradation: UBR5 recognizes and binds a degron that is not accessible when SUPT4H1 is part of the DSIF complex.

It localises to the nucleus. Its function is as follows. Component of the DRB sensitivity-inducing factor complex (DSIF complex), which regulates mRNA processing and transcription elongation by RNA polymerase II. DSIF positively regulates mRNA capping by stimulating the mRNA guanylyltransferase activity of RNGTT/CAP1A. DSIF also acts cooperatively with the negative elongation factor complex (NELF complex) to enhance transcriptional pausing at sites proximal to the promoter. Transcriptional pausing may facilitate the assembly of an elongation competent RNA polymerase II complex. DSIF and NELF promote pausing by inhibition of the transcription elongation factor TFIIS/S-II. TFIIS/S-II binds to RNA polymerase II at transcription pause sites and stimulates the weak intrinsic nuclease activity of the enzyme. Cleavage of blocked transcripts by RNA polymerase II promotes the resumption of transcription from the new 3' terminus and may allow repeated attempts at transcription through natural pause sites. The chain is Transcription elongation factor SPT4 (SUPT4H1) from Pongo abelii (Sumatran orangutan).